The chain runs to 203 residues: Cytochrome c oxidase assembly protein CtaG (203 aa).

The Cytoplasmic segment spans residues 1–16; the sequence is MADQQEKDQKLKKQQR. A helical; Signal-anchor for type II membrane protein membrane pass occupies residues 17 to 39; it reads SNATIAFACLSFFVCMIGAAYAS. Topologically, residues 40 to 203 are periplasmic; the sequence is VPLYRIFCQV…VKAETPTNGS (164 aa).

The protein belongs to the COX11/CtaG family.

It localises to the cell inner membrane. Functionally, exerts its effect at some terminal stage of cytochrome c oxidase synthesis, probably by being involved in the insertion of the copper B into subunit I. The sequence is that of Cytochrome c oxidase assembly protein CtaG from Brucella anthropi (strain ATCC 49188 / DSM 6882 / CCUG 24695 / JCM 21032 / LMG 3331 / NBRC 15819 / NCTC 12168 / Alc 37) (Ochrobactrum anthropi).